Here is a 474-residue protein sequence, read N- to C-terminus: Transcription factor SOX-4 (474 aa).

Residues 1 to 10 (MVQQTNNAEN) are compositionally biased toward polar residues. A disordered region spans residues 1-58 (MVQQTNNAENTEALLAGESSDSGAGLELGIASSPTPGSTASTGGKADDPSWCKTPSGH). The span at 31-44 (ASSPTPGSTASTGG) shows a compositional bias: low complexity. Positions 59 to 127 (IKRPMNAFMV…KHMADYPDYK (69 aa)) form a DNA-binding region, HMG box. Lysine 95 is modified (N6-acetyllysine). Disordered regions lie at residues 128–228 (YRPR…GGGK), 262–286 (ARTP…APGK), and 302–416 (LGTS…NFES). Positions 138–149 (NANSSSSAAASS) are enriched in low complexity. Positions 158-189 (VGGSGGGGHGGGGGGGSSNAGGGGGGASGGGA) are enriched in gly residues. 4 stretches are compositionally biased toward low complexity: residues 266–283 (SASA…ALAA), 304–320 (TSSS…DPSD), 336–354 (APSL…AGRS), and 366–396 (AASP…GSSS). A compositionally biased stretch (acidic residues) spans 397-406 (SDDEFEDDLL). Residues 407–416 (DLNPSSNFES) show a composition bias toward low complexity. Residues 426–434 (SALDRDLDF) carry the 9aaTAD motif.

As to quaternary structure, interacts with UBE2I. Interacts with HDAC1; interaction inhibits the transcriptional activator activity. In terms of processing, acetylation at Lys-95 by KAT5 promotes the transcription activator activity and is required during myoblast differentiation. Acetylation by KAT5 abolishes the interaction between SOX4 and HDAC1 and switches SOX4 into a transcriptional activator. As to expression, testis, brain, and heart.

The protein resides in the nucleus. Its function is as follows. Transcriptional activator that binds with high affinity to the T-cell enhancer motif 5'-AACAAAG-3' motif. Required for IL17A-producing Vgamma2-positive gamma-delta T-cell maturation and development, via binding to regulator loci of RORC to modulate expression. Involved in skeletal myoblast differentiation by promoting gene expression of CALD1. This Homo sapiens (Human) protein is Transcription factor SOX-4.